The sequence spans 199 residues: Recombination protein RecR (199 aa).

Residues 56–71 form a C4-type zinc finger; sequence CSICFNVSQDDQCRIC. Positions 79–174 constitute a Toprim domain; sequence SVLCVVEEYK…RVTRLASGLP (96 aa).

The protein belongs to the RecR family.

In terms of biological role, may play a role in DNA repair. It seems to be involved in an RecBC-independent recombinational process of DNA repair. It may act with RecF and RecO. The protein is Recombination protein RecR of Nocardioides sp. (strain ATCC BAA-499 / JS614).